The sequence spans 266 residues: Mitochondrial genome maintenance protein MGM101 (266 aa).

A mitochondrion-targeting transit peptide spans 1 to 23 (MLHSTKLVFRATPQALCFPVRSY). 2 stretches are compositionally biased toward polar residues: residues 37 to 47 (KTTSKLAPSIT) and 57 to 68 (PSLQEPQSATST). Positions 37–68 (KTTSKLAPSITTEDEVAEQDPSLQEPQSATST) are disordered.

Belongs to the MGM101 family. Forms homooligomers in vitro.

It is found in the mitochondrion matrix. Its subcellular location is the mitochondrion nucleoid. In terms of biological role, plays a role in the replication of the mitochondrial genome and the maintenance of its telomeres. Able to catalyze strand annealing and D-loop formation. Binds a wide variety of DNA substrates. Exhibited the highest affinity for DNA molecules carrying 3' ssDNA overhangs (Y-form, 3' FLAP, 3' overhang) and for substrates with complex structures (X-O and Fork). Forms homogeneous ring-shaped structures at the ssDNA native telomeres ends. Oligomers seem to bind to the ssDNA as a filament until they reach the double-stranded region and induce the formation of bends and loops within the double-stranded part of the molecules. The chain is Mitochondrial genome maintenance protein MGM101 from Candida parapsilosis (strain CDC 317 / ATCC MYA-4646) (Yeast).